A 459-amino-acid polypeptide reads, in one-letter code: Hepatocyte nuclear factor 3-beta (459 aa).

The tract at residues 14-93 (DWSSYYAEPE…AGAMAGMSGS (80 aa)) is transactivation domain 1. The Nuclear localization signal signature appears at 106–113 (LSPSLSPL). T156 carries the phosphothreonine modification. Positions 159-252 (KPPYSYISLI…FENGCYLRRQ (94 aa)) form a DNA-binding region, fork-head. S212 is modified (phosphoserine). Low complexity predominate over residues 268 to 281 (GAASSGGKKTAPGS). The segment at 268-366 (GAASSGGKKT…PGLPPEAHLK (99 aa)) is disordered. Residue S284 is modified to Phosphoserine. A compositionally biased stretch (polar residues) spans 295 to 311 (ASETPAGTESPHSSASP). Position 302 is a phosphothreonine (T302). S304, S307, S308, and S310 each carry phosphoserine. Residues 340–353 (PGQQQQAAAHLLGP) show a composition bias toward low complexity. Residues 362–459 (EAHLKPEHHY…VYSRPIMNSS (98 aa)) form a transactivation domain 2 region. S438 and S459 each carry phosphoserine.

In terms of assembly, binds DNA as a monomer. Binds TLE1. Interacts with FOXA1 and FOXA3. Interacts with PRKDC. Interacts with AKT1. Interacts with TET1; this interaction may recruit TET1 to specific genomic loci to mediate their demethylation. In terms of processing, phosphorylation on Thr-156 abolishes binding to target promoters and subsequent transcription activation upon insulin stimulation. As to expression, restricted mainly to endoderm-derived tissues (lung, liver, stomach, and small intestine). Expressed in epididymis with region-specific expression pattern: no expression is observed in initial segment, low expression in proximal caput, gradiently higher levels of expression in middle and distal caput and highest level in corpus and cauda (at protein level).

The protein localises to the nucleus. It localises to the cytoplasm. Its function is as follows. Transcription factor that is involved in embryonic development, establishment of tissue-specific gene expression and regulation of gene expression in differentiated tissues. Is thought to act as a 'pioneer' factor opening the compacted chromatin for other proteins through interactions with nucleosomal core histones and thereby replacing linker histones at target enhancer and/or promoter sites. Binds DNA with the consensus sequence 5'-[AC]A[AT]T[AG]TT[GT][AG][CT]T[CT]-3'. In embryonic development is required for notochord formation. Involved in the development of multiple endoderm-derived organ systems such as the liver, pancreas and lungs; Foxa1 and Foxa2 seem to have at least in part redundant roles. FOXA1 and FOXA2 are essential for hepatic specification. FOXA1 and FOXA2 are required for morphogenesis and cell differentiation during formation of the lung. FOXA1 and FOXA2 are involved in bile duct formation; they positively regulate the binding glucocorticoid receptor/NR3C1 to the IL6 promoter. FOXA1 and FOXA2 regulate multiple phases of midbrain dopaminergic neuron development; they regulate expression of NEUROG2 at the beginning of mDA neurogenesis and of NR4A2 and EN1 in immature mDA neurons. Modulates the transcriptional activity of nuclear hormone receptors; inhibits AR-mediated transcription from the LCN5 promoter. Binds to fibrinogen beta promoter and is involved in IL6-induced fibrinogen beta transcriptional activation. Originally described as a transcription activator for a number of liver genes such as AFP, albumin, tyrosine aminotransferase, PEPCK, etc. Interacts with the cis-acting regulatory regions of these genes. Involved in glucose homeostasis; regulates the expression of genes important for glucose sensing in pancreatic beta-cells and glucose homeostasis. In pancreatic beta cells activates transcription of potassium channel subunits KCNJ11 and ABCC8. Involved in regulation of fat metabolism; activates transcriptional programs of lipid metabolism and ketogenesis at low insulin state. Involved in transcriptional regulation of MUC2 in the intestine. In Mus musculus (Mouse), this protein is Hepatocyte nuclear factor 3-beta (Foxa2).